We begin with the raw amino-acid sequence, 1002 residues long: MIKLSLLLSLASFTAVLANQRPRCQRCPVSSSKYFQQNNLLESRFQNEVQRLCARRVREESSSESSSSSSSEDCSRRRRRPHREWEDSCSSSYSSCSSTDSCSSSAPCPPPVAQRCDIELKTPIILMGERIYEFLKNYEDQYKKAVLLFLTNILSQISGFNPVFPGGDYDALIEQLKTLGVTVPANTAAELAAIDAAESSALTRAIQANAQKVISDLLTRVSAMCYLDIMSLVNSGLLASQVSSVFNNIQPIITIAGNDLFAKQMAVFQKLSKTLISTAVTNALQGNRAKFTRFYTTQTSNLQTSVQNSSKTLTSELKKLATDTETAFTAFANAEISTPVRRIFRRSITSSGFEDAEEGEDKDNTGEGEEGEDKDNTGEGEEGEDKDNTGEGEEGEDKDNTGEGEEGEDKDNTGEGEEGEDKDNTGEGEEGEDKDNTGEGEEGEDKDNTGEGEEGEDKDNTGEGEEGEDKDNTGEGEEGEDKDNTGEGEEGEDKDNTGEGEEGEDKDNTGEGEEGEDKDNTGEGEEGEDKDNTGEGEEGEDKDNTGEGEEGEDKDNTGEGEEGEDKDNTGEGEEGEEGEDKDNTGEGEEGEDKDNTGEGEEGEDKDNTGEGEEGEEGEDKDNTGEGEEGEDKDNTGEGEEGEDKDNTGEGEEGEDKDNTGDAEEGEEGEDKDSTGEGEEGEDKDNTGEGEEGEEGEDKDNTGEGEEGEEGEDKDNTGEGEEGEEGEDKDNTGEGEEGEDKDNTGEGEEGEDKDNTGEGDEGEDKDNTGEGEEGEEGEDKDNTGEGEEGEDKDNTGEGEEGEEGEDKDNTGEGEEGEEGEDKDNTGEGEEGEEGEDKDNTGEGEEGEDKDNTGEGEEGEDKDNTGEGEEGEDKDNTGEGEEGEEGEDKDNTGEGEEGEDKDNTGEGEEGEDKDNTGEGEEGEDKDNTGEGEEGEDKDNTGEGEEGEDKDNTGEGEEGEEGEDKDNTGDAEEGEEGEDKDNTGDAEEGEEGEDKDNTEEGEETT.

A signal peptide spans 1-18 (MIKLSLLLSLASFTAVLA). A glycan (N-linked (GlcNAc...) asparagine) is linked at N308. Residues 349 to 1002 (TSSGFEDAEE…DNTEEGEETT (654 aa)) form a disordered region. Acidic residues predominate over residues 354–1002 (EDAEEGEDKD…DNTEEGEETT (649 aa)). A run of 24 repeats spans residues 357 to 368 (EEGEDKDNTGEG), 369 to 380 (EEGEDKDNTGEG), 381 to 392 (EEGEDKDNTGEG), 393 to 404 (EEGEDKDNTGEG), 405 to 416 (EEGEDKDNTGEG), 417 to 428 (EEGEDKDNTGEG), 429 to 440 (EEGEDKDNTGEG), 441 to 452 (EEGEDKDNTGEG), 453 to 464 (EEGEDKDNTGEG), 465 to 476 (EEGEDKDNTGEG), 477 to 488 (EEGEDKDNTGEG), 489 to 500 (EEGEDKDNTGEG), 501 to 512 (EEGEDKDNTGEG), 513 to 524 (EEGEDKDNTGEG), 525 to 536 (EEGEDKDNTGEG), 537 to 548 (EEGEDKDNTGEG), 549 to 560 (EEGEDKDNTGEG), 561 to 572 (EEGEDKDNTGEG), 576 to 587 (EEGEDKDNTGEG), 588 to 599 (EEGEDKDNTGEG), 600 to 611 (EEGEDKDNTGEG), 615 to 626 (EEGEDKDNTGEG), 627 to 638 (EEGEDKDNTGEG), and 639 to 650 (EEGEDKDNTGEG). The tract at residues 357 to 998 (EEGEDKDNTG…GEDKDNTEEG (642 aa)) is 50 X 12 AA tandem repeats of E-E-G-E-D-K-D-N-T-G-E-G. Residues 651–662 (EEGEDKDNTGDA) form a 25; degenerate repeat. One copy of the 26; degenerate repeat lies at 663 to 674 (EEGEEGEDKDST). Tandem repeats lie at residues 678-689 (EEGEDKDNTGEG), 693-704 (EEGEDKDNTGEG), 708-719 (EEGEDKDNTGEG), 723-734 (EEGEDKDNTGEG), 735-746 (EEGEDKDNTGEG), 747-758 (EEGEDKDNTGEG), 759-770 (DEGEDKDNTGEG), 774-785 (EEGEDKDNTGEG), 786-797 (EEGEDKDNTGEG), 801-812 (EEGEDKDNTGEG), 816-827 (EEGEDKDNTGEG), 831-842 (EEGEDKDNTGEG), 843-854 (EEGEDKDNTGEG), 855-866 (EEGEDKDNTGEG), 867-878 (EEGEDKDNTGEG), 882-893 (EEGEDKDNTGEG), 894-905 (EEGEDKDNTGEG), 906-915 (EEGEDKDNTG), 918-929 (EEGEDKDNTGEG), 930-941 (EEGEDKDNTGEG), 942-953 (EEGEDKDNTGEG), and 957-969 (EEGEDKDNTGDAE). The 49; degenerate repeat unit spans residues 972-983 (EEGEDKDNTGDA). Residues 987–998 (EEGEDKDNTEEG) form a 50; degenerate repeat.

As to quaternary structure, component of a complex composed of at least SWP1 and SWP2.

The protein localises to the spore. It localises to the perispore. Its function is as follows. Spore wall component. In Encephalitozoon intestinalis (Microsporidian parasite), this protein is Spore wall protein 2 (SWP2).